A 645-amino-acid polypeptide reads, in one-letter code: Zinc finger protein 64 (645 aa).

C2H2-type zinc fingers lie at residues 175 to 197, 203 to 225, and 231 to 253; these read HKCEVCGKCFSRKDKLKTHMRCH, YKCKTCDYAAADSSSLNKHLRIH, and FKCQICPYASRNSSQLTVHLRSH. Residue glutamate 286 forms a Glycyl lysine isopeptide (Lys-Gly) (interchain with G-Cter in SUMO2) linkage. The segment at 299–324 adopts a C2H2-type 4; atypical zinc-finger fold; that stretch reads FNCCYPGCHFKTVHGMKDLDRHLRIH. C2H2-type zinc fingers lie at residues 330 to 352, 358 to 380, 386 to 408, 414 to 436, 442 to 465, 467 to 489, 495 to 517, 523 to 546, and 580 to 602; these read HKCEFCDKCFSRKDNLTMHMRCH, HKCHLCDYAAVDSSSLKKHLRIH, YKCQLCPYASRNSSQLTVHLRSH, FQCWLCSAKFKISSDLKRHMIVH, FKCEFCDVRCTMKANLKSHIRIKH, FKCLHCAFQGRDRADLLEHSRLH, EKCPECSYSCSSAAALRVHSRVH, FKCDFCSFDTKRPSSLAKHVDKVH, and FRCETCGASFVRDDSLRCHKKQH. Residue asparagine 397 forms a Glycyl lysine isopeptide (Lys-Gly) (interchain with G-Cter in SUMO2) linkage. Basic and acidic residues-rich tracts occupy residues 543 to 554 and 600 to 610; these read DKVHRDEAKTEN and KQHSDQSENKN. 2 disordered regions span residues 543–567 and 600–645; these read DKVHRDEAKTENRAPLGKEGLREGS and KQHS…SQDL. Valine 545 carries the phosphoserine modification. Residues 622–631 are compositionally biased toward polar residues; that stretch reads ASGQLSTLVS.

The protein belongs to the krueppel C2H2-type zinc-finger protein family. As to quaternary structure, interacts with ZNF70; this interaction promote the transactivation of the HES1 gene. Interacts with NOTCH1.

The protein resides in the nucleus. Its function is as follows. May be involved in the regulation of mesenchymal cell differentiation through transactivation of NOTCH1 target genes. The polypeptide is Zinc finger protein 64 (Homo sapiens (Human)).